A 199-amino-acid chain; its full sequence is NAD(P)H dehydrogenase (quinone) (199 aa).

In terms of domain architecture, Flavodoxin-like spans 4–190 (VLVLYYSSYG…AMARFQGGHV (187 aa)). Residues 10-15 (SSYGHI) and 78-80 (TRF) each bind FMN. An NAD(+)-binding site is contributed by Tyr-12. Trp-98 lines the substrate pocket. Residues 113–119 (STATQHG) and His-134 each bind FMN.

This sequence belongs to the WrbA family. The cofactor is FMN.

It carries out the reaction a quinone + NADH + H(+) = a quinol + NAD(+). The enzyme catalyses a quinone + NADPH + H(+) = a quinol + NADP(+). This chain is NAD(P)H dehydrogenase (quinone), found in Azoarcus sp. (strain BH72).